The primary structure comprises 431 residues: Histidine--tRNA ligase (431 aa).

Belongs to the class-II aminoacyl-tRNA synthetase family. Homodimer.

The protein resides in the cytoplasm. The catalysed reaction is tRNA(His) + L-histidine + ATP = L-histidyl-tRNA(His) + AMP + diphosphate + H(+). This is Histidine--tRNA ligase from Neisseria meningitidis serogroup A / serotype 4A (strain DSM 15465 / Z2491).